We begin with the raw amino-acid sequence, 111 residues long: Large ribosomal subunit protein uL23 (111 aa).

This sequence belongs to the universal ribosomal protein uL23 family. Part of the 50S ribosomal subunit. Contacts protein L29, and trigger factor when it is bound to the ribosome.

Its function is as follows. One of the early assembly proteins it binds 23S rRNA. One of the proteins that surrounds the polypeptide exit tunnel on the outside of the ribosome. Forms the main docking site for trigger factor binding to the ribosome. The protein is Large ribosomal subunit protein uL23 of Chlamydia abortus (strain DSM 27085 / S26/3) (Chlamydophila abortus).